A 181-amino-acid polypeptide reads, in one-letter code: Inner membrane-spanning protein YciB (181 aa).

A run of 5 helical transmembrane segments spans residues 10-30 (LIIF…GALI), 50-70 (MQLI…ALHD), 80-100 (IVYV…KPAI), 120-140 (WAWV…AYHL), and 148-168 (FKVF…GGYI).

It belongs to the YciB family.

Its subcellular location is the cell inner membrane. Its function is as follows. Plays a role in cell envelope biogenesis, maintenance of cell envelope integrity and membrane homeostasis. This is Inner membrane-spanning protein YciB from Vibrio cholerae serotype O1 (strain ATCC 39315 / El Tor Inaba N16961).